The primary structure comprises 428 residues: MTLGWLQIFRLGLVQLCIGAVVVLTTSTLNRLMVVELALPAVLPGALVALHYGLQIARPAWGLRSDTKGNRTFFVILGMAVLALGAFLAAVAVVLFPLAWGQALLLSVFAYVLIGFGVGASGTSLLALLASATEPRRRAAAATITWLLMIFGIAVTAGTVGHFLDPYSPERLLWIVAIVTLGAVVLTTLAVWGIERRLDHPVPEDTPPRLLEGLREVWAEPQARAFTFFLFLSMTAYFLQELILEPYAGLVFGFTAGETTKLSGMQNGGVFFGMLTVGLALSGLKIGSLRGWVVTGCLGSSLALMAIVALGHLPGAALVPAVIGLGFFNGIFAVAAIGAMMALAGEGRSSREGTRMGLWGAAQAIAAGFGGLVGAGAADLMRLFLPDATAFGLVFGAQALLFIVAAMMATGVVAARGAARVPTVMAGE.

12 helical membrane passes run 3–23, 32–52, 73–93, 115–135, 144–164, 172–192, 225–245, 269–289, 291–311, 317–337, 358–378, and 393–413; these read LGWL…AVVV, LMVV…ALHY, FFVI…AVAV, GFGV…ATEP, ITWL…GHFL, LLWI…LAVW, AFTF…LILE, GVFF…IGSL, GWVV…VALG, ALVP…VAAI, LWGA…AGAA, and LVFG…TGVV.

This sequence belongs to the PucC family.

The protein resides in the membrane. It functions in the pathway porphyrin-containing compound metabolism; bacteriochlorophyll biosynthesis (light-independent). The protein is Bacteriochlorophyll synthase 44.5 kDa chain of Rhodobacter capsulatus (strain ATCC BAA-309 / NBRC 16581 / SB1003).